The following is a 162-amino-acid chain: Anthrone oxygenase nsrD (162 aa).

Transmembrane regions (helical) follow at residues 17–37, 54–74, and 86–106; these read FLSGSMMSLSALVIPLFLDTI, GSIYMPALCVATCGIYGYVAL, and PYVLAAVSTLAMVPFTWWVMV. The N-linked (GlcNAc...) asparagine glycan is linked to N109. Residues 130-150 form a helical membrane-spanning segment; the sequence is LVVKWAWLHVVRSLYPLFGAF.

It belongs to the anthrone oxygenase family.

It localises to the membrane. The catalysed reaction is emodin anthrone + O2 = emodin + H2O + H(+). Its pathway is secondary metabolite biosynthesis. In terms of biological role, anthrone oxygenase; part of the gene cluster that mediates the biosynthesis of the tetrahydroxanthone dimer neosartorin, which exhibits antibacterial activity. The two different monomeric units appear to be synthesized by the same set of enzymes, among which the Baeyer-Villiger monooxygenase nsrF is the key enzyme for the divergence of the biosynthetic routes. The pathway begins with the synthesis of atrochrysone thioester by the polyketide synthase nsrB. The atrochrysone carboxyl ACP thioesterase nsrC then breaks the thioester bond and releases the atrochrysone carboxylic acid from AacuL. Atrochrysone carboxylic acid is decarboxylated by the decarboxylase nsrE, and oxidized by the anthrone oxygenase nsrD to yield emodin. Emodin is then reduced to emodin hydroquinone by the oxidoreductase nsrR. A-ring reduction by the short chain dehydrogenase nsrJ, dehydration by the scytalone dehydratase-like protein nsrI and probable spontaneous re-oxidation, results in overall deoxygenation to chrysophanol. The Baeyer-Villiger monooxygenase nsrF accepts chrysophanol as a substrate to insert one oxygen atom at two different positions to yield the precursors of both monomric units. NsrF is promiscuous/flexible in interacting with the 2 (non methylated and methylated) aromatic rings of chrysophanol, thus diverging the biosynthetic pathway at this point. After the hydrolysis of the lactones, methylesterification by the methyltransferase nsrG yields respectively moniliphenone and 2,2',6'-trihydroxy-4-methyl-6-methoxya-cyldiphenylmethanone. The next steps are the hydroxylation by the FAD-dependent monooxygenase nsrK, followed by isomerization by the monooxygenase nsrQ. The short chain dehydrogenase/reductase nsrO then catalyzes the C-5 ketoreduction to give the xanthone skeleton of blennolide C and 5-acetylblennolide A. The acetyltransferase nsrL has a strict substrate specificity and uses only blennolide A but not blennolide C to yield 5-acetylblennolide A as the single-acetylated product. In the final step of the biosynthesis, the heterodimerization of the 2 xanthones, blennolide C and 5-acetylblennolide A, is catalyzed by the cytochrome P450 monooxygenase nsrP. NsrP can utilize at least three different xanthones as its substrates to perform the dimerization reaction. This chain is Anthrone oxygenase nsrD, found in Aspergillus novofumigatus (strain IBT 16806).